The following is an 87-amino-acid chain: FXYD domain-containing ion transport regulator 3 (87 aa).

A signal peptide spans 1–20; sequence MQKVTLGLLVFLAGFPVLDA. Residues 21–38 lie on the Extracellular side of the membrane; the sequence is NDLEDKNSPFYYDWHSLQ. The chain crosses the membrane as a helical span at residues 39-59; sequence VGGLICAGVLCAMGIIIVMSA. Topologically, residues 60 to 87 are cytoplasmic; the sequence is KCKCKFGQKSGHHPGETPPLITPGSAQS. The disordered stretch occupies residues 66–87; that stretch reads GQKSGHHPGETPPLITPGSAQS.

It belongs to the FXYD family. In terms of assembly, regulatory subunit of the sodium/potassium-transporting ATPase which is composed of a catalytic alpha subunit, a non-catalytic beta subunit and an additional regulatory subunit. Interacts with catalytic alpha subunit ATP1A1. Also interacts with non-catalytic beta subunit ATP1B1. Interacts with the ATP1A1-ATP1B1, ATP1A2-ATP1B1 and ATP1A3-ATP1B1 NKA isozymes. Glutathionylated. In terms of tissue distribution, isoform 1: Expressed mainly in differentiated cells (at protein level). Isoform 2: Expressed mainly in undifferentiated cells (at protein level).

It is found in the cell membrane. In terms of biological role, associates with and regulates the activity of the sodium/potassium-transporting ATPase (NKA) which transports Na(+) out of the cell and K(+) into the cell. Reduces glutathionylation of the NKA beta-1 subunit ATP1B1, thus reversing glutathionylation-mediated inhibition of ATP1B1. Induces a hyperpolarization-activated chloride current when expressed in Xenopus oocytes. Decreases the apparent K+ and Na+ affinity of the sodium/potassium-transporting ATPase over a large range of membrane potentials. Functionally, decreases the apparent K+ affinity of the sodium/potassium-transporting ATPase only at slightly negative and positive membrane potentials and increases the apparent Na+ affinity over a large range of membrane potentials. The sequence is that of FXYD domain-containing ion transport regulator 3 (FXYD3) from Homo sapiens (Human).